Here is a 985-residue protein sequence, read N- to C-terminus: Regulator of telomere elongation helicase 1 homolog (985 aa).

In terms of domain architecture, Helicase ATP-binding spans 7–303; sequence AGIPVHFPFE…QDMAGDEPKD (297 aa). 42–49 contacts ATP; it reads SPTGTGKT. Positions 146, 164, 173, and 209 each coordinate [4Fe-4S] cluster. Positions 252-255 match the DEAH box motif; that stretch reads DEAH. Thr874 is subject to Phosphothreonine.

This sequence belongs to the helicase family. RAD3/XPD subfamily.

It localises to the nucleus. It carries out the reaction ATP + H2O = ADP + phosphate + H(+). Its function is as follows. A probable ATP-dependent DNA helicase implicated in DNA repair and the maintenance of genomic stability. Acts as an anti-recombinase to counteract toxic recombination and limit crossover during meiosis. Regulates meiotic recombination and crossover homeostasis by physically dissociating strand invasion events and thereby promotes noncrossover repair by meiotic synthesis dependent strand annealing (SDSA) as well as disassembly of D loop recombination intermediates. This chain is Regulator of telomere elongation helicase 1 homolog, found in Drosophila erecta (Fruit fly).